The following is a 380-amino-acid chain: Cell division protein FtsZ (380 aa).

GTP is bound by residues 27 to 31 (GAGNN), 119 to 121 (GTG), Glu150, and Asn189.

It belongs to the FtsZ family. As to quaternary structure, homodimer. Polymerizes to form a dynamic ring structure in a strictly GTP-dependent manner. Interacts directly with several other division proteins.

The protein localises to the cytoplasm. Essential cell division protein that forms a contractile ring structure (Z ring) at the future cell division site. The regulation of the ring assembly controls the timing and the location of cell division. One of the functions of the FtsZ ring is to recruit other cell division proteins to the septum to produce a new cell wall between the dividing cells. Binds GTP and shows GTPase activity. The sequence is that of Cell division protein FtsZ from Mycoplasma pneumoniae (strain ATCC 29342 / M129 / Subtype 1) (Mycoplasmoides pneumoniae).